The chain runs to 293 residues: Single-pass membrane and coiled-coil domain-containing protein 2 (293 aa).

Residues 116–188 adopt a coiled-coil conformation; that stretch reads KNLLEFLLKD…SAKLRMYQME (73 aa). Residues 234 to 254 traverse the membrane as a helical segment; sequence IFIMFYVLTVTGLLCYILFFG.

Its subcellular location is the membrane. This Macaca fascicularis (Crab-eating macaque) protein is Single-pass membrane and coiled-coil domain-containing protein 2 (SMCO2).